The sequence spans 135 residues: Large ribosomal subunit protein eL32 (135 aa).

It belongs to the eukaryotic ribosomal protein eL32 family. Component of the large ribosomal subunit.

The protein localises to the cytoplasm. Its function is as follows. Component of the large ribosomal subunit. The ribosome is a large ribonucleoprotein complex responsible for the synthesis of proteins in the cell. This is Large ribosomal subunit protein eL32 (rpl32) from Ictalurus punctatus (Channel catfish).